The following is a 200-amino-acid chain: Peptidyl-tRNA hydrolase (200 aa).

Tyr15 provides a ligand contact to tRNA. His20 serves as the catalytic Proton acceptor. TRNA-binding residues include Phe66, Asn68, and Asn114.

It belongs to the PTH family. In terms of assembly, monomer.

It localises to the cytoplasm. The enzyme catalyses an N-acyl-L-alpha-aminoacyl-tRNA + H2O = an N-acyl-L-amino acid + a tRNA + H(+). Its function is as follows. Hydrolyzes ribosome-free peptidyl-tRNAs (with 1 or more amino acids incorporated), which drop off the ribosome during protein synthesis, or as a result of ribosome stalling. Catalyzes the release of premature peptidyl moieties from peptidyl-tRNA molecules trapped in stalled 50S ribosomal subunits, and thus maintains levels of free tRNAs and 50S ribosomes. This chain is Peptidyl-tRNA hydrolase, found in Ralstonia nicotianae (strain ATCC BAA-1114 / GMI1000) (Ralstonia solanacearum).